The following is a 105-amino-acid chain: Heat shock protein HspQ (105 aa).

The disordered stretch occupies residues 76–105 (EMRDEHPEQPSMDELARTIRKQLQAPRLRN).

The protein belongs to the HspQ family.

It localises to the cytoplasm. Involved in the degradation of certain denaturated proteins, including DnaA, during heat shock stress. The polypeptide is Heat shock protein HspQ (Salmonella agona (strain SL483)).